We begin with the raw amino-acid sequence, 198 residues long: Guanylyl cyclase-activating protein 2 (198 aa).

The N-myristoyl glycine moiety is linked to residue Gly2. EF-hand domains follow at residues 16-51 (DVAE…QDNH), 52-87 (EAAE…VLRG), 88-123 (KLEH…IYKL), and 139-174 (TPEE…DKWV). The Ca(2+) site is built by Asp65, Asn67, Asp69, Thr71, Glu76, Asp101, Asp103, Asn105, Cys107, Glu112, Asp152, Asn154, Asp156, Gln158, and Glu163.

Undergoes dimerization at low calcium ions concentration, while the presence of calcium ions inhibits its dimerization. Dimerization correlates with its ability to activate GC. In terms of tissue distribution, retina and pineal gland.

Functionally, stimulates synthesis of cGMP in photoreceptors. Thought to mediate Ca(2+)-sensitive regulation of retinal guanylyl cyclase (GC), a key event in recovery of the dark state of rod photoreceptors following light exposure. In Gallus gallus (Chicken), this protein is Guanylyl cyclase-activating protein 2 (GUCA1B).